Reading from the N-terminus, the 415-residue chain is Multidrug resistance protein MdtA (415 aa).

Residues 1-21 (MKGSYKSRWVIVIVVVIAAIA) form the signal peptide. Over residues 34-47 (SAAPGATKQAQQSP) the composition is skewed to polar residues. Disordered regions lie at residues 34–60 (SAAP…GPLA) and 392–415 (EAQS…GARS). Residues 399-415 (PEEKATSREYAKKGARS) are compositionally biased toward basic and acidic residues.

It belongs to the membrane fusion protein (MFP) (TC 8.A.1) family. As to quaternary structure, part of a tripartite efflux system composed of MdtA, MdtB and MdtC.

It is found in the cell inner membrane. Its function is as follows. The MdtABC tripartite complex confers resistance against novobiocin and deoxycholate. The protein is Multidrug resistance protein MdtA of Escherichia fergusonii (strain ATCC 35469 / DSM 13698 / CCUG 18766 / IAM 14443 / JCM 21226 / LMG 7866 / NBRC 102419 / NCTC 12128 / CDC 0568-73).